The sequence spans 530 residues: Polyprotein pp62 (530 aa).

This sequence belongs to the asfivirus polyprotein pp62 family. As to quaternary structure, monomer. Predominantly exists as a monomer, with very little dimers. Homodimerization seems to be linked to low pH. Homodimer; disulfide-linked. Homotrimer; disulfide-linked. Homohexamer. In terms of processing, monoubiquitinated in vitro by viral UBCv1. Post-translationally, specific enzymatic cleavages in vivo by the viral pS273R protease yield mature proteins.

It is found in the host cytoplasm. Its subcellular location is the host perinuclear region. The protein localises to the virion. Essential for the correct assembly and maturation of the core of the virion. Its function is as follows. Component of the core shell. Binds to phosphatidylserine, which may enable the core shell binding with the inner membrane. Functionally, component of the core shell. Binds to phosphatidylserine and DNA, which may link the core shell to the inner membrane and to the viral nucleoid. In terms of biological role, component of the core shell. This is Polyprotein pp62 from African swine fever virus (strain Badajoz 1971 Vero-adapted) (Ba71V).